Here is a 729-residue protein sequence, read N- to C-terminus: MAKITKEIVFGNHNLILETGEVARQADGAVMASMNGTQVLVTVVWKKDGGESNDFFPLTVNYQEKFYAIGKIPGGFNKREGRPSDNETLISRLIDRPIRPLFPDNFFNEVQIIATVLSLNPEVSPDIIAMIGASAALSISGVPFNGPIGAARVGYKDGVYLLNPSRKEQEESKLDLVIAGTKDAILMVESEAQELSEDIMRGAMLYGHEMMKNVIKSIEELAREVGKSKPEWKAPEIDTVLKARINDVARNEVEAAYLIKDKQQRYQRLDELREQTISALLAENDELNADVIANMFGELERSIVRNRILDGEPRIDGRDHRTVRPISIRTKFLERTHGSCLFTRGETQAIVVATLGNERDAQILDGISGESRDRFMLHYNFPPYSVGETGQVGSPKRREIGHGRLAKRALMAVLPDANEFPYVLRIVSEITESNGSSSMATVCGTSLALMDAGVPLKAPVAGVAMGLIKEGDRYAVLTDILGDEDHLGDMDFKVAGTEKGITALQMDIKISGITNEIMEQALEQALEGRTHILGVMNNALAEHRTELSQHAPRITTMKVAEDKIRTIIGKGGATIKGLIESTGVSIDIDDSGVIQLFSPDKMALEEAQKQIKALIAEIEVGQTYQGKVSKIVDFGAFINLLPGKDGLLHISQICADRTQKVEEVLQEGQEIEVFVAGIDKQGRVKLEWKDKPQAEAKEVEDAPVSATFLTMEEQSEEINSGNKISEEEE.

Positions 485 and 491 each coordinate Mg(2+). One can recognise a KH domain in the interval 552-611 (PRITTMKVAEDKIRTIIGKGGATIKGLIESTGVSIDIDDSGVIQLFSPDKMALEEAQKQI). The S1 motif domain maps to 621–689 (GQTYQGKVSK…KQGRVKLEWK (69 aa)).

Belongs to the polyribonucleotide nucleotidyltransferase family. Component of the RNA degradosome, which is a multiprotein complex involved in RNA processing and mRNA degradation. Requires Mg(2+) as cofactor.

Its subcellular location is the cytoplasm. The catalysed reaction is RNA(n+1) + phosphate = RNA(n) + a ribonucleoside 5'-diphosphate. Functionally, involved in mRNA degradation. Catalyzes the phosphorolysis of single-stranded polyribonucleotides processively in the 3'- to 5'-direction. The chain is Polyribonucleotide nucleotidyltransferase from Legionella pneumophila (strain Corby).